We begin with the raw amino-acid sequence, 316 residues long: Fe-S cluster assembly protein DRE2 (316 aa).

The N-terminal SAM-like domain stretch occupies residues 7-139 (VSPPKRTLLL…PDYGDNEGAV (133 aa)). Residues 140–208 (TLKFGLKKKN…EDTLMTEEDL (69 aa)) form a linker region. The [2Fe-2S] cluster site is built by Cys218, Cys229, Cys232, and Cys234. The interval 218 to 234 (CQPKAGKRRRACKDCSC) is fe-S binding site A. [4Fe-4S] cluster contacts are provided by Cys279, Cys282, Cys290, and Cys293. Short sequence motifs (cx2C motif) lie at residues 279–282 (CGNC) and 290–293 (CDGC). Residues 279–293 (CGNCSLGDAFRCDGC) are fe-S binding site B.

This sequence belongs to the anamorsin family. Monomer. Interacts with TAH18. Interacts with MIA40. Requires [2Fe-2S] cluster as cofactor. The cofactor is [4Fe-4S] cluster.

The protein resides in the cytoplasm. Its subcellular location is the mitochondrion intermembrane space. Its function is as follows. Component of the cytosolic iron-sulfur (Fe-S) protein assembly (CIA) machinery required for the maturation of extramitochondrial Fe-S proteins. Part of an electron transfer chain functioning in an early step of cytosolic Fe-S biogenesis, facilitating the de novo assembly of a [4Fe-4S] cluster on the scaffold complex CFD1-NBP35. Electrons are transferred to DRE2 from NADPH via the FAD- and FMN-containing protein TAH18. TAH18-DRE2 are also required for the assembly of the diferric tyrosyl radical cofactor of ribonucleotide reductase (RNR), probably by providing electrons for reduction during radical cofactor maturation in the catalytic small subunit RNR2. This is Fe-S cluster assembly protein DRE2 from Fusarium vanettenii (strain ATCC MYA-4622 / CBS 123669 / FGSC 9596 / NRRL 45880 / 77-13-4) (Fusarium solani subsp. pisi).